A 456-amino-acid polypeptide reads, in one-letter code: Argininosuccinate lyase (456 aa).

This sequence belongs to the lyase 1 family. Argininosuccinate lyase subfamily.

The protein resides in the cytoplasm. It catalyses the reaction 2-(N(omega)-L-arginino)succinate = fumarate + L-arginine. The protein operates within amino-acid biosynthesis; L-arginine biosynthesis; L-arginine from L-ornithine and carbamoyl phosphate: step 3/3. The sequence is that of Argininosuccinate lyase from Shewanella woodyi (strain ATCC 51908 / MS32).